Here is a 274-residue protein sequence, read N- to C-terminus: MQFSKMHGLGNDFMVVDAVTQNVYFSPEMIRRLSDRHCGVGFDQLLVVEPPYDPELDFHYRIFNADGSEVAQCGNGARCFARFVRMKNLTNKRDIHVSTQTGRMVLTVTEDDSVRVNMGEPNFDPQQVLFRAARVEKTYIMRAAEQTVLCGVVSMGNPHCVIAVDSVDNAPVATLGPVLESHERFPERANIGFMQVLNRGHIRLRVYERGAGETQACGSGACAAVAVGISQGQLAEQVQVELTGGRLAISWRGPGHPLYMTGPATHIYDGFIHL.

Substrate contacts are provided by asparagine 11, glutamine 44, and asparagine 64. Cysteine 73 serves as the catalytic Proton donor. Residues 74 to 75 (GN), asparagine 157, asparagine 190, and 208 to 209 (ER) contribute to the substrate site. The active-site Proton acceptor is cysteine 217. 218–219 (GS) provides a ligand contact to substrate.

This sequence belongs to the diaminopimelate epimerase family. Homodimer.

The protein localises to the cytoplasm. The catalysed reaction is (2S,6S)-2,6-diaminopimelate = meso-2,6-diaminopimelate. It participates in amino-acid biosynthesis; L-lysine biosynthesis via DAP pathway; DL-2,6-diaminopimelate from LL-2,6-diaminopimelate: step 1/1. Its function is as follows. Catalyzes the stereoinversion of LL-2,6-diaminopimelate (L,L-DAP) to meso-diaminopimelate (meso-DAP), a precursor of L-lysine and an essential component of the bacterial peptidoglycan. The protein is Diaminopimelate epimerase of Sodalis glossinidius (strain morsitans).